Reading from the N-terminus, the 237-residue chain is 1-(5-phosphoribosyl)-5-[(5-phosphoribosylamino)methylideneamino] imidazole-4-carboxamide isomerase (237 aa).

D8 acts as the Proton acceptor in catalysis. The active-site Proton donor is the D129.

This sequence belongs to the HisA/HisF family.

The protein localises to the cytoplasm. The catalysed reaction is 1-(5-phospho-beta-D-ribosyl)-5-[(5-phospho-beta-D-ribosylamino)methylideneamino]imidazole-4-carboxamide = 5-[(5-phospho-1-deoxy-D-ribulos-1-ylimino)methylamino]-1-(5-phospho-beta-D-ribosyl)imidazole-4-carboxamide. The protein operates within amino-acid biosynthesis; L-histidine biosynthesis; L-histidine from 5-phospho-alpha-D-ribose 1-diphosphate: step 4/9. The sequence is that of 1-(5-phosphoribosyl)-5-[(5-phosphoribosylamino)methylideneamino] imidazole-4-carboxamide isomerase from Clostridium botulinum (strain Alaska E43 / Type E3).